A 232-amino-acid chain; its full sequence is Putative homeobox protein NANOG2 (232 aa).

The segment covering 1–10 (MDLPIEDSHD) has biased composition (basic and acidic residues). Residues 1-39 (MDLPIEDSHDSSTSPKGKQPTTAEKSATKKEDKVPVKKQ) form a disordered region. A compositionally biased stretch (polar residues) spans 11-25 (SSTSPKGKQPTTAEK). The span at 26–35 (SATKKEDKVP) shows a compositional bias: basic and acidic residues. 8 repeat units span residues 123-127 (WSNQT), 128-132 (WNNSI), 133-137 (WSNET), 143-147 (WSNHS), 148-152 (WNTQT), 153-157 (WCTQS), 158-162 (WNNQA), and 163-167 (WNSPF). The interval 123 to 167 (WSNQTWNNSIWSNETQNIQSWSNHSWNTQTWCTQSWNNQAWNSPF) is 8 X repeats starting with a Trp in each unit. Residues 123–167 (WSNQTWNNSIWSNETQNIQSWSNHSWNTQTWCTQSWNNQAWNSPF) are sufficient for transactivation activity. The tract at residues 168–232 (YNCGEESLQS…YSTNMQPEDV (65 aa)) is sufficient for strong transactivation activity.

It belongs to the Nanog homeobox family.

It is found in the nucleus. Functionally, probable transcriptional regulator. The sequence is that of Putative homeobox protein NANOG2 (NANOGP1) from Pan troglodytes (Chimpanzee).